A 222-amino-acid polypeptide reads, in one-letter code: Protein-L-isoaspartate O-methyltransferase (222 aa).

Serine 70 is an active-site residue.

The protein belongs to the methyltransferase superfamily. L-isoaspartyl/D-aspartyl protein methyltransferase family.

Its subcellular location is the cytoplasm. The catalysed reaction is [protein]-L-isoaspartate + S-adenosyl-L-methionine = [protein]-L-isoaspartate alpha-methyl ester + S-adenosyl-L-homocysteine. Functionally, catalyzes the methyl esterification of L-isoaspartyl residues in peptides and proteins that result from spontaneous decomposition of normal L-aspartyl and L-asparaginyl residues. It plays a role in the repair and/or degradation of damaged proteins. This Jannaschia sp. (strain CCS1) protein is Protein-L-isoaspartate O-methyltransferase.